The sequence spans 363 residues: 3-isopropylmalate dehydrogenase (363 aa).

Glycine 78 to glutamate 91 contributes to the NAD(+) binding site. Positions 99, 109, 138, and 227 each coordinate substrate. The Mg(2+) site is built by aspartate 227, aspartate 251, and aspartate 255. Residue glycine 285–asparagine 297 participates in NAD(+) binding.

The protein belongs to the isocitrate and isopropylmalate dehydrogenases family. LeuB type 1 subfamily. Homodimer. The cofactor is Mg(2+). Mn(2+) is required as a cofactor.

Its subcellular location is the cytoplasm. It catalyses the reaction (2R,3S)-3-isopropylmalate + NAD(+) = 4-methyl-2-oxopentanoate + CO2 + NADH. It participates in amino-acid biosynthesis; L-leucine biosynthesis; L-leucine from 3-methyl-2-oxobutanoate: step 3/4. Catalyzes the oxidation of 3-carboxy-2-hydroxy-4-methylpentanoate (3-isopropylmalate) to 3-carboxy-4-methyl-2-oxopentanoate. The product decarboxylates to 4-methyl-2 oxopentanoate. The polypeptide is 3-isopropylmalate dehydrogenase (Pectobacterium atrosepticum (strain SCRI 1043 / ATCC BAA-672) (Erwinia carotovora subsp. atroseptica)).